The sequence spans 330 residues: Polygalacturonase inhibitor 2 (330 aa).

The first 21 residues, 1-21 (MDKTMTLFLLLSTLLLTTSLA), serve as a signal peptide directing secretion. Cystine bridges form between Cys25/Cys55 and Cys56/Cys63. 10 LRR repeats span residues 69-93 (NHRV…VGDL), 94-117 (PYLT…TIAK), 118-141 (LKNL…FLSQ), 142-166 (LKNL…LSSL), 167-192 (RKLE…TFSG), 194-215 (VPSL…LGNP), 217-237 (FYRI…LFGA), 238-260 (KKTT…KVKL), 261-285 (AKTL…WSKA), and 287-308 (FQLL…EYIQ). Residues Asn106, Asn120, and Asn130 are each glycosylated (N-linked (GlcNAc...) asparagine). Asn291 carries N-linked (GlcNAc...) asparagine glycosylation. 2 disulfide bridges follow: Cys298–Cys320 and Cys322–Cys329.

It belongs to the polygalacturonase-inhibiting protein family.

The protein resides in the secreted. The protein localises to the cell wall. It localises to the membrane. Its function is as follows. Inhibitor of fungal polygalacturonase. It is an important factor for plant resistance to phytopathogenic fungi. The polypeptide is Polygalacturonase inhibitor 2 (PGIP2) (Arabidopsis thaliana (Mouse-ear cress)).